Consider the following 515-residue polypeptide: Serine/threonine-protein kinase STE7 (515 aa).

Positions 191-466 (LVQLGKIGAG…IHELLHHDLI (276 aa)) constitute a Protein kinase domain. Residues 197–205 (IGAGNSGTV) and Lys-220 contribute to the ATP site. Asp-331 (proton acceptor) is an active-site residue. Phosphoserine is present on Ser-359. Thr-363 is modified (phosphothreonine).

This sequence belongs to the protein kinase superfamily. STE Ser/Thr protein kinase family. MAP kinase kinase subfamily.

The catalysed reaction is L-seryl-[protein] + ATP = O-phospho-L-seryl-[protein] + ADP + H(+). It catalyses the reaction L-threonyl-[protein] + ATP = O-phospho-L-threonyl-[protein] + ADP + H(+). The enzyme catalyses L-tyrosyl-[protein] + ATP = O-phospho-L-tyrosyl-[protein] + ADP + H(+). Phosphorylated at multiple sites in response to pheromone. Functionally, serine/threonine protein kinase required for cell-type-specific transcription and signal transduction in yeast. It is thought that it is phosphorylated by the ste11 protein kinase and that it can phosphorylate the FUS3 and or KSS1 kinases. This is Serine/threonine-protein kinase STE7 (STE7) from Saccharomyces cerevisiae (strain ATCC 204508 / S288c) (Baker's yeast).